Here is a 61-residue protein sequence, read N- to C-terminus: Small ribosomal subunit protein uS14 (61 aa).

Residues cysteine 24, cysteine 27, cysteine 40, and cysteine 43 each coordinate Zn(2+).

It belongs to the universal ribosomal protein uS14 family. Zinc-binding uS14 subfamily. In terms of assembly, part of the 30S ribosomal subunit. Contacts proteins S3 and S10. It depends on Zn(2+) as a cofactor.

Binds 16S rRNA, required for the assembly of 30S particles and may also be responsible for determining the conformation of the 16S rRNA at the A site. The chain is Small ribosomal subunit protein uS14 from Borreliella afzelii (strain PKo) (Borrelia afzelii).